A 330-amino-acid polypeptide reads, in one-letter code: uncharacterized protein (330 aa).

This is an uncharacterized protein from Archaeoglobus fulgidus (strain ATCC 49558 / DSM 4304 / JCM 9628 / NBRC 100126 / VC-16).